Reading from the N-terminus, the 291-residue chain is MKRNDPCWCGSGRKWKQCHYPQPPKMSPEALKQHYASQYNILLKTPEQKAKIYNACQITARILDELCKASQKGVTTNELDELSQELHKKYDAIAAPFHYGSPPFPKTICTSLNEVICHGIPNDIPLKDGDIMNIDVSCIVDGYYGDCSRMVMIGEVPEIKKKICQAALECLNDSIAILKPGIPLCEIGEAIEARADTYGFSVVDQFVGHGVGIEFHENPYVPHYRNRSMIPLAPGMIFTIEPMINVGKKEGVVDPKNQWEARTCDNQPSAQWEHTIAITETGYEILTLLND.

Substrate is bound at residue His118. Residues Asp135, Asp146, and His209 each contribute to the a divalent metal cation site. His216 contacts substrate. A divalent metal cation-binding residues include Glu241 and Glu273.

It belongs to the peptidase M24A family. Methionine aminopeptidase type 1 subfamily. Monomer. Requires Co(2+) as cofactor. Zn(2+) is required as a cofactor. Mn(2+) serves as cofactor. It depends on Fe(2+) as a cofactor.

It carries out the reaction Release of N-terminal amino acids, preferentially methionine, from peptides and arylamides.. Removes the N-terminal methionine from nascent proteins. The N-terminal methionine is often cleaved when the second residue in the primary sequence is small and uncharged (Met-Ala-, Cys, Gly, Pro, Ser, Thr, or Val). Requires deformylation of the N(alpha)-formylated initiator methionine before it can be hydrolyzed. The sequence is that of Methionine aminopeptidase from Chlamydia pneumoniae (Chlamydophila pneumoniae).